The sequence spans 342 residues: Zinc transporter ZIP11 (342 aa).

Transmembrane regions (helical) follow at residues 12 to 32 (LLGTFFTWAMTAAGAALVFIF), 44 to 64 (LGFAAGVMLAASYWSLLAPAV), 72 to 92 (GFGAFAFFPVAVGFTLGAAFV), 194 to 214 (IALLILAITIHNIPEGLAVGV), 263 to 285 (FWYGQLSGMVEPLAGVFGAFAVV), 290 to 307 (ILPYALAFAAGAMVYVVM), and 322 to 342 (LASWASILGFVVMMSLDVGLG).

It belongs to the ZIP transporter (TC 2.A.5) family. Highly expressed in the testes and portions of the digestive system including the stomach, ileum and cecum. In contrast, expressed at very low levels in liver, duodenum, jejunum, and colon.

The protein localises to the cell membrane. It is found in the nucleus. Its subcellular location is the cytoplasm. The protein resides in the golgi apparatus. The catalysed reaction is Zn(2+)(in) = Zn(2+)(out). The enzyme catalyses Cu(2+)(in) = Cu(2+)(out). Zinc importer that regulates cytosolic zinc concentration either via zinc influx from the extracellular compartment or efflux from intracellular organelles such as Golgi apparatus. May transport copper ions as well. The transport mechanism remains to be elucidated. The polypeptide is Zinc transporter ZIP11 (Slc39a11) (Mus musculus (Mouse)).